A 434-amino-acid chain; its full sequence is [Pyruvate dehydrogenase (acetyl-transferring)] kinase isozyme 1, mitochondrial (434 aa).

The N-terminal 26 residues, 1–26 (MRLARLLRGGTSVRPLCAVPCASRSL), are a transit peptide targeting the mitochondrion. Tyr136 is modified (phosphotyrosine; by FGFR1). Residues 161–391 (TEYKESFGVD…DAVIYIKALS (231 aa)) form the Histidine kinase domain. Tyr241 is modified (phosphotyrosine; by FGFR1, ABL1, FLT3 and JAK2). Position 242 is a phosphotyrosine; by FGFR1 (Tyr242). ATP contacts are provided by residues 277-284 (ELFKNAMR), Asp316, 335-336 (ST), and 352-357 (GFGYGL). Residue Thr336 is modified to Phosphothreonine. N6-succinyllysine is present on Lys403.

Belongs to the PDK/BCKDK protein kinase family. Homodimer, and heterodimer with PDK2. Interacts with the pyruvate dehydrogenase complex subunit DLAT, and is part of the multimeric pyruvate dehydrogenase complex that contains multiple copies of pyruvate dehydrogenase (E1), dihydrolipoamide acetyltransferase (DLAT, E2) and lipoamide dehydrogenase (DLD, E3). Interacts with phosphoglycerate kinase PGK1; the interaction is direct, occurs under hypoxic conditions and leads to PDK1-mediated inhibition of pyruvate dehydrogenase complex activity. Phosphorylated by constitutively activated ABL1, FGFR1, FLT3 and JAK2 (in vitro), and this may also occur in cancer cells that express constitutively activated ABL1, FGFR1, FLT3 and JAK2. Phosphorylation at Tyr-241 and Tyr-242 strongly increases kinase activity, while phosphorylation at Tyr-136 has a lesser effect. Phosphorylated under hypoxic conditions at Thr-336 by phosphoglycerate kinase PGK1 which has an activating effect. In terms of tissue distribution, detected in pancreas islets (at protein level). Expressed predominantly in the heart.

It localises to the mitochondrion matrix. The catalysed reaction is L-seryl-[pyruvate dehydrogenase E1 alpha subunit] + ATP = O-phospho-L-seryl-[pyruvate dehydrogenase E1 alpha subunit] + ADP + H(+). Activated by binding to the pyruvate dehydrogenase complex subunit DLAT. Strongly activated by NADH plus acetyl-coenzyme A. Inhibited by dichloroacetate. In terms of biological role, kinase that plays a key role in regulation of glucose and fatty acid metabolism and homeostasis via phosphorylation of the pyruvate dehydrogenase subunits PDHA1 and PDHA2. This inhibits pyruvate dehydrogenase activity, and thereby regulates metabolite flux through the tricarboxylic acid cycle, down-regulates aerobic respiration and inhibits the formation of acetyl-coenzyme A from pyruvate. Plays an important role in cellular responses to hypoxia and is important for cell proliferation under hypoxia. This chain is [Pyruvate dehydrogenase (acetyl-transferring)] kinase isozyme 1, mitochondrial (Pdk1), found in Rattus norvegicus (Rat).